The following is a 434-amino-acid chain: Histidine--tRNA ligase (434 aa).

The protein belongs to the class-II aminoacyl-tRNA synthetase family. As to quaternary structure, homodimer.

The protein resides in the cytoplasm. It carries out the reaction tRNA(His) + L-histidine + ATP = L-histidyl-tRNA(His) + AMP + diphosphate + H(+). The chain is Histidine--tRNA ligase from Latilactobacillus sakei subsp. sakei (strain 23K) (Lactobacillus sakei subsp. sakei).